A 579-amino-acid chain; its full sequence is Sulfite reductase [NADPH] hemoprotein beta-component (579 aa).

[4Fe-4S] cluster contacts are provided by Cys-434, Cys-440, Cys-479, and Cys-483. Siroheme is bound at residue Cys-483.

This sequence belongs to the nitrite and sulfite reductase 4Fe-4S domain family. In terms of assembly, alpha(8)-beta(8). The alpha component is a flavoprotein, the beta component is a hemoprotein. It depends on siroheme as a cofactor. [4Fe-4S] cluster serves as cofactor.

It carries out the reaction hydrogen sulfide + 3 NADP(+) + 3 H2O = sulfite + 3 NADPH + 4 H(+). The protein operates within sulfur metabolism; hydrogen sulfide biosynthesis; hydrogen sulfide from sulfite (NADPH route): step 1/1. In terms of biological role, component of the sulfite reductase complex that catalyzes the 6-electron reduction of sulfite to sulfide. This is one of several activities required for the biosynthesis of L-cysteine from sulfate. In Salmonella choleraesuis (strain SC-B67), this protein is Sulfite reductase [NADPH] hemoprotein beta-component.